The primary structure comprises 193 residues: Putative 3-methyladenine DNA glycosylase (193 aa).

The protein belongs to the DNA glycosylase MPG family.

The sequence is that of Putative 3-methyladenine DNA glycosylase from Nitrosospira multiformis (strain ATCC 25196 / NCIMB 11849 / C 71).